The primary structure comprises 140 residues: Large ribosomal subunit protein uL13 (140 aa).

This sequence belongs to the universal ribosomal protein uL13 family. In terms of assembly, part of the 50S ribosomal subunit.

Its function is as follows. This protein is one of the early assembly proteins of the 50S ribosomal subunit, although it is not seen to bind rRNA by itself. It is important during the early stages of 50S assembly. The chain is Large ribosomal subunit protein uL13 from Methanosarcina mazei (strain ATCC BAA-159 / DSM 3647 / Goe1 / Go1 / JCM 11833 / OCM 88) (Methanosarcina frisia).